The following is a 158-amino-acid chain: NAD(P)H-quinone oxidoreductase subunit J, chloroplastic (158 aa).

Belongs to the complex I 30 kDa subunit family. As to quaternary structure, NDH is composed of at least 16 different subunits, 5 of which are encoded in the nucleus.

Its subcellular location is the plastid. It localises to the chloroplast thylakoid membrane. The catalysed reaction is a plastoquinone + NADH + (n+1) H(+)(in) = a plastoquinol + NAD(+) + n H(+)(out). It carries out the reaction a plastoquinone + NADPH + (n+1) H(+)(in) = a plastoquinol + NADP(+) + n H(+)(out). Its function is as follows. NDH shuttles electrons from NAD(P)H:plastoquinone, via FMN and iron-sulfur (Fe-S) centers, to quinones in the photosynthetic chain and possibly in a chloroplast respiratory chain. The immediate electron acceptor for the enzyme in this species is believed to be plastoquinone. Couples the redox reaction to proton translocation, and thus conserves the redox energy in a proton gradient. This Nandina domestica (Heavenly bamboo) protein is NAD(P)H-quinone oxidoreductase subunit J, chloroplastic.